Here is a 276-residue protein sequence, read N- to C-terminus: Syntaxin-12 (276 aa).

An N-acetylserine modification is found at Ser-2. The Cytoplasmic portion of the chain corresponds to 2–248 (SYGPLDMYRN…RAAYYQKKSR (247 aa)). A coiled-coil region spans residues 33–131 (IQRISQATAQ…RRVSEKEKES (99 aa)). A phosphoserine mark is found at Ser-139, Ser-142, Ser-218, and Ser-225. In terms of domain architecture, t-SNARE coiled-coil homology spans 178–240 (LELIKERETA…ERATEQLQRA (63 aa)). The helical; Anchor for type IV membrane protein transmembrane segment at 249-269 (KKMCILVLVLSVIILILGLII) threads the bilayer. Topologically, residues 270-276 (WLVYKTK) are vesicular.

Belongs to the syntaxin family. As to quaternary structure, interacts with NAPA and SNAP23. Identified in a complex containing STX6, STX12, VAMP4 and VTI1A. Associates with the BLOC-1 complex. Interacts with BLOC1S6. Interacts with GRIPAP1. Forms a complex with GRIP1, GRIA2 and NSG1; controls the intracellular fate of AMPAR and the endosomal sorting of the GRIA2 subunit toward recycling and membrane targeting. Interacts with NSG1. Interacts with TPC1. Interacts (via N-terminus) with VPS13B.

The protein resides in the endosome membrane. It localises to the golgi apparatus membrane. The protein localises to the endomembrane system. It is found in the early endosome membrane. Its subcellular location is the recycling endosome membrane. SNARE promoting fusion of transport vesicles with target membranes. Together with SNARE STX6, promotes movement of vesicles from endosomes to the cell membrane, and may therefore function in the endocytic recycling pathway. Through complex formation with GRIP1, GRIA2 and NSG1 controls the intracellular fate of AMPAR and the endosomal sorting of the GRIA2 subunit toward recycling and membrane targeting. This is Syntaxin-12 (STX12) from Homo sapiens (Human).